A 727-amino-acid chain; its full sequence is Non-structural protein 4 (727 aa).

2 disordered regions span residues 1–38 and 671–727; these read MNQSRSFVTGRGRDLSRTPSALSSNSETPGSMSSPSEG and GNSM…KLSK. Positions 17-38 are enriched in polar residues; it reads RTPSALSSNSETPGSMSSPSEG. Residues 712–727 are compositionally biased toward basic residues; the sequence is SRRKARKARAASKLSK.

In Rice dwarf virus (isolate Fujian) (RDV), this protein is Non-structural protein 4.